A 93-amino-acid chain; its full sequence is Late embryogenesis abundant protein B19.1A (93 aa).

The tract at residues 1–93 is disordered; sequence MASGQQERSQ…IDESKFKTKS (93 aa). 2 stretches are compositionally biased toward basic and acidic residues: residues 9-19 and 73-93; these read SQLDRKAREGE and GGER…KTKS.

It belongs to the small hydrophilic plant seed protein family. As to expression, embryos and young seedlings.

In terms of biological role, lea proteins are late embryonic proteins abundant in higher plant seed embryos. It may have a role in desiccation tolerance by acting as an osmoprotective protein or as a desiccation-damage repair protein. This Hordeum vulgare (Barley) protein is Late embryogenesis abundant protein B19.1A (B19.1A).